The chain runs to 232 residues: Large ribosomal subunit protein uL1 (232 aa).

This sequence belongs to the universal ribosomal protein uL1 family. Part of the 50S ribosomal subunit.

Its function is as follows. Binds directly to 23S rRNA. The L1 stalk is quite mobile in the ribosome, and is involved in E site tRNA release. Protein L1 is also a translational repressor protein, it controls the translation of the L11 operon by binding to its mRNA. This chain is Large ribosomal subunit protein uL1, found in Coxiella burnetii (strain RSA 331 / Henzerling II).